We begin with the raw amino-acid sequence, 487 residues long: Acetyl-coenzyme A carboxylase carboxyl transferase subunit beta, chloroplastic (487 aa).

One can recognise a CoA carboxyltransferase N-terminal domain in the interval 223–487 (LWVQCENCYG…LHAFFPLNQN (265 aa)). 4 residues coordinate Zn(2+): Cys227, Cys230, Cys246, and Cys249. The C4-type zinc-finger motif lies at 227 to 249 (CENCYGLNYKKSFKSKMNLCEQC).

It belongs to the AccD/PCCB family. As to quaternary structure, acetyl-CoA carboxylase is a heterohexamer composed of biotin carboxyl carrier protein, biotin carboxylase and 2 subunits each of ACCase subunit alpha and ACCase plastid-coded subunit beta (accD). Requires Zn(2+) as cofactor.

The protein resides in the plastid. It localises to the chloroplast stroma. The catalysed reaction is N(6)-carboxybiotinyl-L-lysyl-[protein] + acetyl-CoA = N(6)-biotinyl-L-lysyl-[protein] + malonyl-CoA. Its pathway is lipid metabolism; malonyl-CoA biosynthesis; malonyl-CoA from acetyl-CoA: step 1/1. Its function is as follows. Component of the acetyl coenzyme A carboxylase (ACC) complex. Biotin carboxylase (BC) catalyzes the carboxylation of biotin on its carrier protein (BCCP) and then the CO(2) group is transferred by the transcarboxylase to acetyl-CoA to form malonyl-CoA. In Panax ginseng (Korean ginseng), this protein is Acetyl-coenzyme A carboxylase carboxyl transferase subunit beta, chloroplastic.